The sequence spans 289 residues: Mas-related G-protein coupled receptor member G (289 aa).

Residues 1-13 lie on the Extracellular side of the membrane; that stretch reads MFSIFNIWGTFNK. A helical membrane pass occupies residues 14–34; the sequence is VLFFLSLTVSLAGLVGNALLL. Residues 35–52 are Cytoplasmic-facing; the sequence is WHLGLHIKKGPFNTYLLH. Residues 53 to 73 traverse the membrane as a helical segment; the sequence is LAAADFLFLSCQVGFSIATIV. Residues 74–78 lie on the Extracellular side of the membrane; that stretch reads SGHED. The chain crosses the membrane as a helical span at residues 79–99; that stretch reads TLYFPVTFLWFAVGLWLLAAF. Residues 100 to 120 are Cytoplasmic-facing; that stretch reads SVDCCLAYMFPSFCSPNRRPR. A helical transmembrane segment spans residues 121–141; the sequence is FTSVVLCLVIWALTMPAVLLP. At 142-164 the chain is on the extracellular side; it reads ANACGLLKNGMSLLVCLKYHWTS. A helical transmembrane segment spans residues 165–185; the sequence is VTWLAVLSGMACGASKFLLIF. The Cytoplasmic segment spans residues 186–199; it reads GNCCSSQPPPKFCK. Residues 200-220 form a helical membrane-spanning segment; sequence LAQCSGILLFFCRLPLVVYWC. Residues 221 to 222 are Extracellular-facing; that stretch reads LR. Residues 223–243 form a helical membrane-spanning segment; that stretch reads PVLKFLLPFFFPLATLLACID. Over 244-289 the chain is Cytoplasmic; it reads SSAKPLLYYMKGRQLRKDPLQVALNRALGEESQSGLGGLSLPMHQV.

It belongs to the G-protein coupled receptor 1 family. Mas subfamily.

The protein resides in the cell membrane. Its function is as follows. Orphan receptor. May regulate nociceptor function and/or development, including the sensation or modulation of pain. This Mus musculus (Mouse) protein is Mas-related G-protein coupled receptor member G (Mrgprg).